The following is a 462-amino-acid chain: L-seryl-tRNA(Sec) selenium transferase (462 aa).

Lys-292 is modified (N6-(pyridoxal phosphate)lysine).

The protein belongs to the SelA family. Requires pyridoxal 5'-phosphate as cofactor.

The protein localises to the cytoplasm. The enzyme catalyses L-seryl-tRNA(Sec) + selenophosphate + H(+) = L-selenocysteinyl-tRNA(Sec) + phosphate. Its pathway is aminoacyl-tRNA biosynthesis; selenocysteinyl-tRNA(Sec) biosynthesis; selenocysteinyl-tRNA(Sec) from L-seryl-tRNA(Sec) (bacterial route): step 1/1. In terms of biological role, converts seryl-tRNA(Sec) to selenocysteinyl-tRNA(Sec) required for selenoprotein biosynthesis. In Clostridium perfringens (strain 13 / Type A), this protein is L-seryl-tRNA(Sec) selenium transferase.